A 112-amino-acid polypeptide reads, in one-letter code: Large ribosomal subunit protein eL33w (112 aa).

This sequence belongs to the eukaryotic ribosomal protein eL33 family.

The sequence is that of Large ribosomal subunit protein eL33w (RPL35AA) from Arabidopsis thaliana (Mouse-ear cress).